Reading from the N-terminus, the 357-residue chain is Chorismate synthase (357 aa).

NADP(+) contacts are provided by R48 and R54. Residues 125–127 (RSS), 243–244 (NA), G283, 298–302 (KPTSS), and R324 each bind FMN.

The protein belongs to the chorismate synthase family. Homotetramer. It depends on FMNH2 as a cofactor.

It carries out the reaction 5-O-(1-carboxyvinyl)-3-phosphoshikimate = chorismate + phosphate. It functions in the pathway metabolic intermediate biosynthesis; chorismate biosynthesis; chorismate from D-erythrose 4-phosphate and phosphoenolpyruvate: step 7/7. Functionally, catalyzes the anti-1,4-elimination of the C-3 phosphate and the C-6 proR hydrogen from 5-enolpyruvylshikimate-3-phosphate (EPSP) to yield chorismate, which is the branch point compound that serves as the starting substrate for the three terminal pathways of aromatic amino acid biosynthesis. This reaction introduces a second double bond into the aromatic ring system. This Pasteurella multocida (strain Pm70) protein is Chorismate synthase.